The chain runs to 174 residues: uncharacterized protein (174 aa).

Residues 78-97 (TFGRNIKTPDISNPTRARNE) are disordered.

This sequence to yeast YMR295c.

This is an uncharacterized protein from Saccharomyces cerevisiae (strain ATCC 204508 / S288c) (Baker's yeast).